Reading from the N-terminus, the 189-residue chain is UPF0301 protein PA14_05290 (189 aa).

This sequence belongs to the UPF0301 (AlgH) family.

The chain is UPF0301 protein PA14_05290 from Pseudomonas aeruginosa (strain UCBPP-PA14).